The following is a 372-amino-acid chain: Anhydro-N-acetylmuramic acid kinase (372 aa).

Residue 13 to 20 (GTSMDGID) coordinates ATP.

The protein belongs to the anhydro-N-acetylmuramic acid kinase family.

The enzyme catalyses 1,6-anhydro-N-acetyl-beta-muramate + ATP + H2O = N-acetyl-D-muramate 6-phosphate + ADP + H(+). Its pathway is amino-sugar metabolism; 1,6-anhydro-N-acetylmuramate degradation. It functions in the pathway cell wall biogenesis; peptidoglycan recycling. Its function is as follows. Catalyzes the specific phosphorylation of 1,6-anhydro-N-acetylmuramic acid (anhMurNAc) with the simultaneous cleavage of the 1,6-anhydro ring, generating MurNAc-6-P. Is required for the utilization of anhMurNAc either imported from the medium or derived from its own cell wall murein, and thus plays a role in cell wall recycling. The polypeptide is Anhydro-N-acetylmuramic acid kinase (Rhizobium johnstonii (strain DSM 114642 / LMG 32736 / 3841) (Rhizobium leguminosarum bv. viciae)).